Reading from the N-terminus, the 379-residue chain is Pectin lyase A (379 aa).

A signal peptide spans 1–20 (MKYSTIFSAAAAVFAGSAAA). Intrachain disulfides connect Cys-83–Cys-102 and Cys-92–Cys-226. Thr-88 is a glycosylation site (O-linked (Man) threonine). Residue Asn-129 is glycosylated (N-linked (GlcNAc...) asparagine). Arg-256 is an active-site residue. A disulfide bridge connects residues Cys-322 and Cys-330. The O-linked (Man) serine; in strain 4M-147 glycan is linked to Ser-368.

Belongs to the polysaccharide lyase 1 family. N-glycosylated at Asn-129 and O-glycosylated at Thr-88 when expressed in Aspergillus nidulans. The protein from strain 4M-147 is O-glycosylated at Thr-88 and Ser-368. PubMed:9195887 modeled GalNAc at the O-glycosylation site, a glycosylation not observed in fungi. The O-linked saccharide is probably mannose.

It localises to the secreted. It catalyses the reaction Eliminative cleavage of (1-&gt;4)-alpha-D-galacturonan methyl ester to give oligosaccharides with 4-deoxy-6-O-methyl-alpha-D-galact-4-enuronosyl groups at their non-reducing ends.. Pectinolytic enzymes consist of four classes of enzymes: pectin lyase, polygalacturonase, pectin methylesterase and rhamnogalacturonase. Among pectinolytic enzymes, pectin lyase is the most important in depolymerization of pectin, since it cleaves internal glycosidic bonds of highly methylated pectins. The protein is Pectin lyase A (pelA) of Aspergillus niger.